We begin with the raw amino-acid sequence, 357 residues long: Protein RecA (357 aa).

Gly-67–Thr-74 contacts ATP. The disordered stretch occupies residues Asn-333–Phe-357. Acidic residues predominate over residues Ala-348–Phe-357.

The protein belongs to the RecA family.

It localises to the cytoplasm. Can catalyze the hydrolysis of ATP in the presence of single-stranded DNA, the ATP-dependent uptake of single-stranded DNA by duplex DNA, and the ATP-dependent hybridization of homologous single-stranded DNAs. It interacts with LexA causing its activation and leading to its autocatalytic cleavage. The chain is Protein RecA from Pectobacterium carotovorum subsp. carotovorum (strain PC1).